Consider the following 180-residue polypeptide: ATP synthase subunit delta (180 aa).

The protein belongs to the ATPase delta chain family. F-type ATPases have 2 components, F(1) - the catalytic core - and F(0) - the membrane proton channel. F(1) has five subunits: alpha(3), beta(3), gamma(1), delta(1), epsilon(1). CF(0) has four main subunits: a(1), b(1), b'(1) and c(10-14). The alpha and beta chains form an alternating ring which encloses part of the gamma chain. F(1) is attached to F(0) by a central stalk formed by the gamma and epsilon chains, while a peripheral stalk is formed by the delta, b and b' chains.

The protein localises to the cellular thylakoid membrane. Its function is as follows. F(1)F(0) ATP synthase produces ATP from ADP in the presence of a proton or sodium gradient. F-type ATPases consist of two structural domains, F(1) containing the extramembraneous catalytic core and F(0) containing the membrane proton channel, linked together by a central stalk and a peripheral stalk. During catalysis, ATP synthesis in the catalytic domain of F(1) is coupled via a rotary mechanism of the central stalk subunits to proton translocation. This protein is part of the stalk that links CF(0) to CF(1). It either transmits conformational changes from CF(0) to CF(1) or is implicated in proton conduction. In Prochlorococcus marinus (strain AS9601), this protein is ATP synthase subunit delta.